A 528-amino-acid polypeptide reads, in one-letter code: MEVEQTSVRSDTNSTCEYLDAEGDPESPNLYQEADPDQEAEQQNHSIISELRDGLGTMRDNSALSPEPGQENKGLAASVESLALSTSTSAKTEDSIGGGLEEEYDYQHDSLWQGQKKHIFILSEAGKPIFSLHGNEDKLATLFGVIQALVSFVQMGQDAITSIHAGGIKFAFMQRSSLILVAASRSNMSVQQLQLQLGDVYNQILSILTYSHMTKIFERRKNFDLRRLLSGSERLFYNLLANDSSSAKVSNNIFTFLTNSIRVFPLPTTIRSQITSAIQSNCSKIKNLVFAVLIANNKLIALVRMKKYSIHPADLRLIFNLVECSESFKSSENWSPICLPKFDMNGYLHAHVSYLADDCQACLLLLSVDRDAFFTLAEAKAKITEKLRKSHCLEAINEELQQPFNAKLYQQVVGIPELRHFLYKPKSTAQLLCPMLRHPYKSLTELERLEAIYCDLLHRIHNSSRPLKLIYEMKEREVVLAWATGTYELYAIFEPVVDKATVIKYVDKLIKWIEKEYDVYFIRNHATF.

Residues 1-16 are compositionally biased toward polar residues; the sequence is MEVEQTSVRSDTNSTC. The tract at residues 1 to 50 is disordered; the sequence is MEVEQTSVRSDTNSTCEYLDAEGDPESPNLYQEADPDQEAEQQNHSIISE.

This sequence belongs to the MON1/SAND family. Component of the Mon1-Ccz1 guanyl-nucleotide exchange factor complex made up of Mon1, Ccz1 and Bulli; the interaction of Bulli with the Mon1-Ccz1 heterodimer is mediated via the C-terminal Mic1 domain of Bulli. Mon1 and Ccz1 form a stable complex which displays Rab7 GEF activity with or without Bulli; GEF activity is enhanced by Bulli possibly by improving membrane association of the complex. Interacts with Rab5 and Rab7; preferentially binds GTP-bound Rab5 and GDP-bound Rab7.

The protein resides in the cytoplasm. It is found in the cytosol. With respect to regulation, the Rab7 guanyl-nucleotide exchange factor (GEF) activity of the Mon1-Ccz1 complex is autoinhibited by the N-terminal disordered region of Mon1. GEF activity is stimulated by Rab5-mediated recruitment to membranes. Its function is as follows. Part of the Mon1-Ccz1 guanyl-nucleotide exchange factor complex specific for Rab7 that promotes the exchange of GDP to GTP, converting Rab7 from an inactive GDP-bound form into an active GTP-bound form. Plays an important role in membrane trafficking through the secretory apparatus. Required for recruitment of Rab7 to endosomal and autophagosomal membranes to mediate endolysosomal and autolysosomal vesicle maturation. Required for fusion of multivesicular bodies and lysosomes but not their formation or trafficking. Involved in the replacement of Rab5 (and possibly Rab4) with Rab7, also known as Rab conversion or the Rab cascade, during endosomal maturation. The Mon1-Ccz1 complex is recruited to phosphatidylinositol 3-phosphate (PtdIns[3]P) enriched membranes by Rab5, which stimulates recruitment and guanyl-nucleotide exchange of Rab7. Together with Rab7 required for autolysosome formation in fat cells and autophagic degradation during starvation-induced basal and developmental autophagy. Involved in neuromuscular junction (NMJ) presynaptic bouton function and morphogenesis. Together with Rab7, regulates levels of postsynaptic glutamate receptor GluRIIA in the NMJ presynapse. This Drosophila melanogaster (Fruit fly) protein is Vacuolar fusion protein MON1 homolog.